Reading from the N-terminus, the 206-residue chain is LexA repressor (206 aa).

The segment at residues Val28–Ser48 is a DNA-binding region (H-T-H motif). Active-site for autocatalytic cleavage activity residues include Ser128 and Lys166.

The protein belongs to the peptidase S24 family. As to quaternary structure, homodimer.

It catalyses the reaction Hydrolysis of Ala-|-Gly bond in repressor LexA.. In terms of biological role, represses a number of genes involved in the response to DNA damage (SOS response), including recA and lexA. In the presence of single-stranded DNA, RecA interacts with LexA causing an autocatalytic cleavage which disrupts the DNA-binding part of LexA, leading to derepression of the SOS regulon and eventually DNA repair. The sequence is that of LexA repressor from Bacillus cytotoxicus (strain DSM 22905 / CIP 110041 / 391-98 / NVH 391-98).